A 218-amino-acid chain; its full sequence is Claudin-3 (218 aa).

Residues 1-8 (MSMGLEIA) lie on the Cytoplasmic side of the membrane. The chain crosses the membrane as a helical span at residues 9 to 29 (GTSLAVLGWLSTIVCCALPMW). At 30 to 80 (RVTAFIGSSIITAQITWEGLWMNCVVQSTGQMQCKVYDSLLALPQDLQAAR) the chain is on the extracellular side. Residues 81 to 101 (ALIVVSILLAAFGLLVALVGA) form a helical membrane-spanning segment. Topologically, residues 102–115 (QCTNCVQDDTAKAK) are cytoplasmic. The chain crosses the membrane as a helical span at residues 116–136 (ITIVAGVLFLLAALLTLVPVS). At 137–159 (WSANTIIRDFYNPLVPDAQKREM) the chain is on the extracellular side. Residues 160–180 (GAGLYVGWAAAALQLLGGALL) traverse the membrane as a helical segment. Residues 181–218 (CCSCPPRDKKYAPTKIVYSAPRSAGPGTSTAYDRKDYV) lie on the Cytoplasmic side of the membrane. Tyrosine 198 carries the phosphotyrosine modification. Residues serine 199 and serine 209 each carry the phosphoserine modification. The interval 217-218 (YV) is interactions with TJP1, TJP2 and TJP3.

The protein belongs to the claudin family. Can form homo- and heteropolymers with other CLDN. Homopolymers interact with CLDN1 and CLDN2 homopolymers. Interacts in cis (within the same plasma membrane) with CLDN19. Directly interacts with TJP1/ZO-1, TJP2/ZO-2 and TJP3/ZO-3.

It is found in the cell junction. The protein resides in the tight junction. It localises to the cell membrane. Functionally, plays a major role in tight junction-specific obliteration of the intercellular space, through calcium-independent cell-adhesion activity. The protein is Claudin-3 (CLDN3) of Canis lupus familiaris (Dog).